A 258-amino-acid polypeptide reads, in one-letter code: Myelin proteolipid protein (258 aa).

At 1 to 22 (MFPVRHALLCKALGCYDCCIRC) the chain is on the cytoplasmic side. S-palmitoyl cysteine attachment occurs at residues Cys-18, Cys-19, and Cys-22. Residues 23 to 48 (LGAVPYPSLVSTLLCFTGMALFCGCG) traverse the membrane as a helical segment. At 49–82 (HEALAHTEVLVETYFVRNIQDYVILASFIKYFQY) the chain is on the extracellular side. Residues 83–103 (VIYGLASFFFLYCILLLAEGF) traverse the membrane as a helical segment. At 104–128 (YTTSAVKQTFGEFRSTRCGRCLSLT) the chain is on the cytoplasmic side. Residues Cys-121 and Cys-124 are each lipidated (S-palmitoyl cysteine). The chain crosses the membrane as a helical span at residues 129-149 (FIIVTYVLAVIWLAVFAFTAI). Residues 150-218 (PSSSSLIWHR…KTKEFFVTYD (69 aa)) lie on the Extracellular side of the membrane. A disulfide bridge links Cys-181 with Cys-200. A helical transmembrane segment spans residues 219–239 (LYIAAFAGAGIALLALFLYVV). Residues 240-258 (ATTYNYAVLRFLGRKGLRC) lie on the Cytoplasmic side of the membrane.

Belongs to the myelin proteolipid protein family. In terms of tissue distribution, central nervous system. Highest levels in spinal cord and medulla oblongata.

It localises to the cell membrane. Its function is as follows. This is the major myelin protein from the central nervous system. It plays an important role in the formation or maintenance of the multilamellar structure of myelin. May be involved in neuron and glial cell differentiation. The sequence is that of Myelin proteolipid protein (plp) from Oncorhynchus mykiss (Rainbow trout).